The following is a 219-amino-acid chain: ATP phosphoribosyltransferase (219 aa).

The protein belongs to the ATP phosphoribosyltransferase family. Short subfamily. In terms of assembly, heteromultimer composed of HisG and HisZ subunits.

The protein resides in the cytoplasm. The catalysed reaction is 1-(5-phospho-beta-D-ribosyl)-ATP + diphosphate = 5-phospho-alpha-D-ribose 1-diphosphate + ATP. It participates in amino-acid biosynthesis; L-histidine biosynthesis; L-histidine from 5-phospho-alpha-D-ribose 1-diphosphate: step 1/9. Functionally, catalyzes the condensation of ATP and 5-phosphoribose 1-diphosphate to form N'-(5'-phosphoribosyl)-ATP (PR-ATP). Has a crucial role in the pathway because the rate of histidine biosynthesis seems to be controlled primarily by regulation of HisG enzymatic activity. The chain is ATP phosphoribosyltransferase from Clostridium kluyveri (strain NBRC 12016).